We begin with the raw amino-acid sequence, 745 residues long: Polyribonucleotide nucleotidyltransferase (745 aa).

The Mg(2+) site is built by aspartate 487 and aspartate 493. The 60-residue stretch at proline 554 to isoleucine 613 folds into the KH domain. One can recognise an S1 motif domain in the interval glycine 623–lysine 691. The tract at residues glutamine 695–glutamate 745 is disordered. Positions leucine 701–glutamate 745 are enriched in basic and acidic residues.

This sequence belongs to the polyribonucleotide nucleotidyltransferase family. The cofactor is Mg(2+).

It is found in the cytoplasm. It catalyses the reaction RNA(n+1) + phosphate = RNA(n) + a ribonucleoside 5'-diphosphate. Involved in mRNA degradation. Catalyzes the phosphorolysis of single-stranded polyribonucleotides processively in the 3'- to 5'-direction. The protein is Polyribonucleotide nucleotidyltransferase of Methylorubrum extorquens (strain CM4 / NCIMB 13688) (Methylobacterium extorquens).